Consider the following 594-residue polypeptide: Actin-histidine N-methyltransferase (594 aa).

Residues 1–22 (MGKKSRVKTQKSGTGATATVSP) form a disordered region. The segment covering 10–20 (QKSGTGATATV) has biased composition (polar residues). Residues arginine 75, 104-106 (EGF), arginine 254, 275-279 (DMCNH), and 325-327 (SGF) contribute to the S-adenosyl-L-methionine site. The region spanning 94–314 (EGFEMVNFKE…AGDQIYIFYG (221 aa)) is the SET domain. Residues 551-594 (GLVNGENLIPNGTRSENESLSPEESENVTGEESSGSMAKVKERL) are disordered.

The protein belongs to the class V-like SAM-binding methyltransferase superfamily. SETD3 actin-histidine methyltransferase family. Interacts with MYOD1. Phosphorylated by GSK3B, which is required for recognition by the SCF(FBXW7) complex and subsequent degradation. In terms of processing, ubiquitinated by the SCF(FBXW7) complex following phosphorylation by GSK3B, leading to its degradation by the proteasome. As to expression, prominently expressed in the heart and skeletal muscles and is also detected weakly in the stomach, small intestine, and colon.

It localises to the cytoplasm. The protein resides in the nucleus. It carries out the reaction L-histidyl-[protein] + S-adenosyl-L-methionine = N(tele)-methyl-L-histidyl-[protein] + S-adenosyl-L-homocysteine + H(+). Functionally, protein-histidine N-methyltransferase that specifically mediates 3-methylhistidine (tele-methylhistidine) methylation of actin at 'His-73'. Histidine methylation of actin is required for smooth muscle contraction of the laboring uterus during delivery. Does not have protein-lysine N-methyltransferase activity and probably only catalyzes histidine methylation of actin. This is Actin-histidine N-methyltransferase from Mus musculus (Mouse).